Reading from the N-terminus, the 159-residue chain is Cathelicidin-5 (159 aa).

Residues M1 to A29 form the signal peptide. Residue Q30 is modified to Pyrrolidone carboxylic acid. Positions Q30–V131 are excised as a propeptide. 2 cysteine pairs are disulfide-bonded: C86–C97 and C108–C125.

It belongs to the cathelicidin family.

It is found in the secreted. Functionally, exerts a potent antimicrobial activity against Gram-negative and Gram-positive bacteria, including methicillin-resistant Staphylococcus aureus, and fungi. The polypeptide is Cathelicidin-5 (CATHL5) (Bos taurus (Bovine)).